Reading from the N-terminus, the 444-residue chain is Ras-related protein RabX (444 aa).

29–36 (GGDVCSKN) is a binding site for GTP. An Effector region motif is present at residues 51-58 (LIQVFDDY). Position 73 to 77 (73 to 77 (EFSSI)) interacts with GTP. The interval 91–136 (ENNKNKNNNNNYNYNNNNYNNNNNNNNNNNNNNNNNNNNNNNNNNS) is disordered. The segment covering 95 to 135 (NKNNNNNYNYNNNNYNNNNNNNNNNNNNNNNNNNNNNNNNN) has biased composition (low complexity). Residue 207–210 (NDSN) coordinates GTP. Disordered stretches follow at residues 213 to 232 (TPNF…SNII) and 298 to 401 (LQGD…NNDL). 2 stretches are compositionally biased toward low complexity: residues 217–232 (SDSS…SNII) and 303–399 (NNNN…TYNN). C439 is lipidated: S-palmitoyl cysteine. A Cysteine methyl ester modification is found at C441. C441 is lipidated: S-geranylgeranyl cysteine. The propeptide at 442–444 (NLM) is removed in mature form.

The protein belongs to the small GTPase superfamily. Rab family.

It is found in the cell membrane. This is Ras-related protein RabX (rabX) from Dictyostelium discoideum (Social amoeba).